A 262-amino-acid chain; its full sequence is Hydroxyethylthiazole kinase (262 aa).

M50 serves as a coordination point for substrate. Residues R125 and T171 each coordinate ATP. G198 provides a ligand contact to substrate.

This sequence belongs to the Thz kinase family. It depends on Mg(2+) as a cofactor.

It catalyses the reaction 5-(2-hydroxyethyl)-4-methylthiazole + ATP = 4-methyl-5-(2-phosphooxyethyl)-thiazole + ADP + H(+). It participates in cofactor biosynthesis; thiamine diphosphate biosynthesis; 4-methyl-5-(2-phosphoethyl)-thiazole from 5-(2-hydroxyethyl)-4-methylthiazole: step 1/1. Catalyzes the phosphorylation of the hydroxyl group of 4-methyl-5-beta-hydroxyethylthiazole (THZ). The chain is Hydroxyethylthiazole kinase from Escherichia coli O7:K1 (strain IAI39 / ExPEC).